The chain runs to 165 residues: Mid1-interacting protein 1-like (165 aa).

The interval 46 to 67 is disordered; sequence DQESHASVSHNNNNNNEPSFPN.

It belongs to the SPOT14 family.

The protein localises to the nucleus. It is found in the cytoplasm. Its subcellular location is the cytoskeleton. Functionally, involved in stabilization of microtubules. May play a role in the regulation of lipogenesis. In Danio rerio (Zebrafish), this protein is Mid1-interacting protein 1-like.